The following is a 311-amino-acid chain: HPr kinase/phosphorylase (311 aa).

Active-site residues include His-138 and Lys-159. Residue 153–160 (GDSGIGKS) coordinates ATP. Residue Ser-160 coordinates Mg(2+). Residue Asp-177 is the Proton acceptor; for phosphorylation activity. Proton donor; for dephosphorylation activity of the active site. The segment at 201-210 (LEIRGVGIID) is important for the catalytic mechanism of both phosphorylation and dephosphorylation. Glu-202 contacts Mg(2+). The active site involves Arg-243. Residues 264-269 (PVKTGR) form an important for the catalytic mechanism of dephosphorylation region.

The protein belongs to the HPrK/P family. In terms of assembly, homohexamer. Mg(2+) is required as a cofactor.

It carries out the reaction [HPr protein]-L-serine + ATP = [HPr protein]-O-phospho-L-serine + ADP + H(+). It catalyses the reaction [HPr protein]-O-phospho-L-serine + phosphate + H(+) = [HPr protein]-L-serine + diphosphate. Its function is as follows. Catalyzes the ATP- as well as the pyrophosphate-dependent phosphorylation of a specific serine residue in HPr, a phosphocarrier protein of the phosphoenolpyruvate-dependent sugar phosphotransferase system (PTS). HprK/P also catalyzes the pyrophosphate-producing, inorganic phosphate-dependent dephosphorylation (phosphorolysis) of seryl-phosphorylated HPr (P-Ser-HPr). The two antagonistic activities of HprK/P are regulated by several intracellular metabolites, which change their concentration in response to the absence or presence of rapidly metabolisable carbon sources (glucose, fructose, etc.) in the growth medium. Therefore, by controlling the phosphorylation state of HPr, HPrK/P is a sensor enzyme that plays a major role in the regulation of carbon metabolism and sugar transport: it mediates carbon catabolite repression (CCR), and regulates PTS-catalyzed carbohydrate uptake and inducer exclusion. This chain is HPr kinase/phosphorylase, found in Streptococcus sanguinis (strain SK36).